The primary structure comprises 202 residues: MKEKLTVSDSKKLFHEQFPYVIPGLYKRIVDEMLVELNLLNHQNEFIQDDLFCVGLTETFKELTKGYKPEEHLRVLFESLCNSSNFEPKKIKEASKKTLEVYKDKSLKEISILLKQKSDSNLYSSRILNLGIYLIIANATDFKDIKDPEKNKIISDIINKLNLSFNKAEKDIGIYKSSILKMEQAKELLQEAKIKDKKEKKK.

Residues 174 to 202 (IYKSSILKMEQAKELLQEAKIKDKKEKKK) are a coiled coil.

Belongs to the THF1 family.

In terms of biological role, may be involved in photosynthetic membrane biogenesis. The sequence is that of Protein Thf1 from Prochlorococcus marinus subsp. pastoris (strain CCMP1986 / NIES-2087 / MED4).